A 607-amino-acid chain; its full sequence is Protein PLASTID MOVEMENT IMPAIRED 2 (607 aa).

Coiled coils occupy residues 66-295 (KAKK…NAEL) and 329-445 (MLER…ESRR).

It belongs to the WEB family. Interacts with WEB1. In terms of tissue distribution, ubiquitous but preferentially in chloroplast-containing tissues.

The protein resides in the cytoplasm. Its function is as follows. Required for the chloroplast avoidance response under high intensity blue light. This avoidance response consists in the relocation of chloroplasts on the anticlinal side of exposed cells. Acts in association with WEB1 to maintain the velocity of chloroplast photorelocation movement via cp-actin filaments regulation. The protein is Protein PLASTID MOVEMENT IMPAIRED 2 (PMI2) of Arabidopsis thaliana (Mouse-ear cress).